Consider the following 621-residue polypeptide: Zinc metalloproteinase-disintegrin-like TSV-DM (621 aa).

The N-terminal stretch at 1–20 (MIQVLLVTICLAVFPYQGSS) is a signal peptide. Residues 21 to 191 (IILESGNVND…EASQSNLTPE (171 aa)) constitute a propeptide that is removed on maturation. Q192 carries the post-translational modification Pyrrolidone carboxylic acid. The region spanning 200–396 (KYVKFFLVAD…NMPQCILKKP (197 aa)) is the Peptidase M12B domain. N219 carries N-linked (GlcNAc...) asparagine glycosylation. Disulfide bonds link C311–C391, C351–C375, and C353–C358. H336 contributes to the Zn(2+) binding site. E337 is an active-site residue. Positions 340 and 346 each coordinate Zn(2+). The Disintegrin domain maps to 404 to 489 (PPVCGNYFVE…AECTDRFQRN (86 aa)). The Ca(2+) site is built by V406, N409, F411, E413, E416, and D419. Intrachain disulfides connect C407–C436, C418–C431, C420–C426, C430–C453, C444–C450, C449–C475, C462–C482, C469–C500, C493–C505, C512–C562, C527–C573, C540–C550, C557–C599, and C593–C605. Positions 468 to 470 (ECD) match the D/ECD-tripeptide motif. The Ca(2+) site is built by D470, M471, D473, D484, and R485. Residue N502 is glycosylated (N-linked (GlcNAc...) asparagine).

It belongs to the venom metalloproteinase (M12B) family. P-III subfamily. P-IIIc sub-subfamily. As to quaternary structure, homodimer; disulfide-linked. It depends on Zn(2+) as a cofactor. Post-translationally, the N-terminus is blocked. Expressed by the venom gland.

It is found in the secreted. Inhibited by EDTA and DTT, and partially inhibited by EGTA, but not inhibited by PMSF and NEM. Functionally, snake venom zinc metalloprotease that hydrolyzes the alpha-chain (FGA) and more slowly the beta-chain (FGB) of fibrinogen. Inhibits cell proliferation and induces cell morphologic changes transiently on human umbilical vein endothelial cells. This Trimeresurus stejnegeri (Chinese green tree viper) protein is Zinc metalloproteinase-disintegrin-like TSV-DM.